An 822-amino-acid polypeptide reads, in one-letter code: MEFNKLELLIIRALKLNTNSNKKNSFYNKFLNLRNKVLNIQKNSLDQPSDAPSNNKKRNLDQPDNPNQKEPGKARKIIWSFIIIILVLGVLALIILSGFSFSATSLNAASFTENGTSSFKITTNTNQTRTIGGAPSTIYQRDSTLYVIYIENSFSGYYYSAIITDISVSNNTASVGNGSNTTGGSTSNLQKGLQIANLLVDGSGNVYKNKDNNGSTTSGTTTFSLNSNLTSAMKLQGWSSNQSMSLPTSYSFYTAASLVLSILPFILLIGIIYYSMRKMGQAGGGQDNVFSIGKSQAKLAKSTVLFSDVAGIEEEKEELIEIVDYLKRPDRYAAMGARVPKGVILYGPPGTGKTLLAKAVAGEAKVPFFQVSGSAFEDMLVGVGAKRVRDLFNKAVKSAPAIIFIDEIDSVGSKRGKFETTAGSLADQTLNQLLAEMDGFNTKTGVIVMAATNRLDVLDDALLRPGRFDRHIQVNLPDIKERVAILKIHSRNKNISETVDLEDIARRTPGFSGAQLENVLNEATLLAVRRNKKSIYTEELDEAIDRVIAGPAKKTRVISLEEKRQIAFHEAGHAIVGMYTKGSEVVEKITIIPRGQAAGYTLSVPEIQELSIQKKSDLLGMVAGLLGGRASEEINFGKEFISTGAANDLYKATNIVRAMVTQFGMSPNVGLAQYYPSEGTVNPYQSKNFSESTSQLIDKEIERIFKERYEYAYKIIKEHNKEVELIVESLLLLETIVKPQIDFIHKYKQLPKEALEKKKELEEKKKAEDLIRKAKKESEASSKEEKEMDVEKKVQKPSASSTEPTSKPKKAPSKESSSDKKK.

Residues 1–76 (MEFNKLELLI…NQKEPGKARK (76 aa)) are Cytoplasmic-facing. Positions 44 to 54 (SLDQPSDAPSN) are enriched in polar residues. Positions 44–71 (SLDQPSDAPSNNKKRNLDQPDNPNQKEP) are disordered. The chain crosses the membrane as a helical span at residues 77 to 97 (IIWSFIIIILVLGVLALIILS). The Extracellular portion of the chain corresponds to 98-251 (GFSFSATSLN…QSMSLPTSYS (154 aa)). The chain crosses the membrane as a helical span at residues 252–272 (FYTAASLVLSILPFILLIGII). The Cytoplasmic portion of the chain corresponds to 273–822 (YYSMRKMGQA…SKESSSDKKK (550 aa)). 347–354 (GPPGTGKT) contributes to the ATP binding site. Histidine 569 contacts Zn(2+). Residue glutamate 570 is part of the active site. Zn(2+) contacts are provided by histidine 573 and aspartate 648. The segment covering 758 to 794 (KKELEEKKKAEDLIRKAKKESEASSKEEKEMDVEKKV) has biased composition (basic and acidic residues). The segment at 758 to 822 (KKELEEKKKA…SKESSSDKKK (65 aa)) is disordered. The segment covering 796–805 (KPSASSTEPT) has biased composition (low complexity). A compositionally biased stretch (basic and acidic residues) spans 812–822 (PSKESSSDKKK).

In the central section; belongs to the AAA ATPase family. This sequence in the C-terminal section; belongs to the peptidase M41 family. Homohexamer. Zn(2+) serves as cofactor.

Its subcellular location is the cell membrane. Its function is as follows. Acts as a processive, ATP-dependent zinc metallopeptidase for both cytoplasmic and membrane proteins. Plays a role in the quality control of integral membrane proteins. This Malacoplasma penetrans (strain HF-2) (Mycoplasma penetrans) protein is ATP-dependent zinc metalloprotease FtsH.